Here is a 445-residue protein sequence, read N- to C-terminus: Methylenetetrahydrofolate--tRNA-(uracil-5-)-methyltransferase TrmFO (445 aa).

9-14 serves as a coordination point for FAD; it reads GGGLAG.

The protein belongs to the MnmG family. TrmFO subfamily. The cofactor is FAD.

The protein localises to the cytoplasm. It catalyses the reaction uridine(54) in tRNA + (6R)-5,10-methylene-5,6,7,8-tetrahydrofolate + NADH + H(+) = 5-methyluridine(54) in tRNA + (6S)-5,6,7,8-tetrahydrofolate + NAD(+). It carries out the reaction uridine(54) in tRNA + (6R)-5,10-methylene-5,6,7,8-tetrahydrofolate + NADPH + H(+) = 5-methyluridine(54) in tRNA + (6S)-5,6,7,8-tetrahydrofolate + NADP(+). Catalyzes the folate-dependent formation of 5-methyl-uridine at position 54 (M-5-U54) in all tRNAs. The polypeptide is Methylenetetrahydrofolate--tRNA-(uracil-5-)-methyltransferase TrmFO (Aquifex aeolicus (strain VF5)).